Consider the following 418-residue polypeptide: MHKKKYTFSMWMKYLEKFDKKDRKNLFELKLIAKKLGLLNLKSFFFTVGGTNGKGTTCAMLEKLLLDSGYQVGLYTSPHLINYSERIKVNGLYLSEKDHIFSFLIIDAEKGNVSLTYFEFITLSALFLFSQYSLDIIILEVGLGGRLDATNIIDSDLSVITNIGIDHTSCLGTDRISIGREKSGIFRKGKIAVIGEKNIPISVDEIAKEKKTILKKIDVDWFWTRTKIDSWNFIHSNIELYNLPVSRIPLSNTAIALASLFYSGLEVNLKKLKSSISKVQLSGRFQTVFNSPRIILDVAHNVHAALYLSEKIDEIDTEGQIYAVFGILKDKDVAGVVQVLQKKINYWYVVNLKTNRSASINYLKKKLSLNNALFFNNINESWQAIKKVITKKDIILVFGSFFTVSEFMSIKDRRLTLY.

53 to 56 lines the ATP pocket; sequence GKGT. Serine 77 provides a ligand contact to Mg(2+). 116 to 119 provides a ligand contact to 7,8-dihydropteroate; that stretch reads TYFE. Glutamate 140 lines the Mg(2+) pocket. 147-149 contributes to the 7,8-dihydropteroate binding site; sequence LDA. Residue histidine 167 participates in Mg(2+) binding. The ATP site is built by asparagine 252, arginine 284, and aspartate 297.

It belongs to the folylpolyglutamate synthase family. As to quaternary structure, monomer. Requires Mg(2+) as cofactor.

It catalyses the reaction 7,8-dihydropteroate + L-glutamate + ATP = 7,8-dihydrofolate + ADP + phosphate + H(+). It carries out the reaction (6S)-5,6,7,8-tetrahydrofolyl-(gamma-L-Glu)(n) + L-glutamate + ATP = (6S)-5,6,7,8-tetrahydrofolyl-(gamma-L-Glu)(n+1) + ADP + phosphate + H(+). The catalysed reaction is 10-formyltetrahydrofolyl-(gamma-L-Glu)(n) + L-glutamate + ATP = 10-formyltetrahydrofolyl-(gamma-L-Glu)(n+1) + ADP + phosphate + H(+). The enzyme catalyses (6R)-5,10-methylenetetrahydrofolyl-(gamma-L-Glu)(n) + L-glutamate + ATP = (6R)-5,10-methylenetetrahydrofolyl-(gamma-L-Glu)(n+1) + ADP + phosphate + H(+). It functions in the pathway cofactor biosynthesis; tetrahydrofolate biosynthesis; 7,8-dihydrofolate from 2-amino-4-hydroxy-6-hydroxymethyl-7,8-dihydropteridine diphosphate and 4-aminobenzoate: step 2/2. Its pathway is cofactor biosynthesis; tetrahydrofolylpolyglutamate biosynthesis. Functions in two distinct reactions of the de novo folate biosynthetic pathway. Catalyzes the addition of a glutamate residue to dihydropteroate (7,8-dihydropteroate or H2Pte) to form dihydrofolate (7,8-dihydrofolate monoglutamate or H2Pte-Glu). Also catalyzes successive additions of L-glutamate to tetrahydrofolate or 10-formyltetrahydrofolate or 5,10-methylenetetrahydrofolate, leading to folylpolyglutamate derivatives. The sequence is that of Dihydrofolate synthase/folylpolyglutamate synthase (folC) from Buchnera aphidicola subsp. Schizaphis graminum (strain Sg).